We begin with the raw amino-acid sequence, 610 residues long: All-trans-retinol 13,14-reductase (610 aa).

The first 18 residues, 1–18 (MWLPLVLLLAVLLLAVLC), serve as a signal peptide directing secretion.

The protein belongs to the carotenoid/retinoid oxidoreductase family. CrtISO subfamily. It depends on NAD(+) as a cofactor. The cofactor is NADP(+). FAD is required as a cofactor. In terms of tissue distribution, expressed in liver; expression positively correlates with obesity and liver steatosis. Expressed in adipose tissue; expression tends to be decreased in obese versus lean individuals.

It is found in the endoplasmic reticulum membrane. It carries out the reaction all-trans-13,14-dihydroretinol + A = all-trans-retinol + AH2. Functionally, catalyzes the saturation of all-trans-retinol to all-trans-13,14-dihydroretinol. Does not exhibit any activity toward all-trans-retinoic acid, nor 9-cis, 11-cis or 13-cis-retinol isomers. May play a role in the metabolism of vitamin A. Independently of retinol conversion, may regulate liver metabolism upstream of MLXIPL/ChREBP. May play a role in adipocyte differentiation. In Homo sapiens (Human), this protein is All-trans-retinol 13,14-reductase (RETSAT).